A 311-amino-acid chain; its full sequence is Beta-ketoacyl-[acyl-carrier-protein] synthase III (311 aa).

Residues Cys114 and His238 contribute to the active site. The tract at residues 239 to 243 (QANIR) is ACP-binding. Residue Asn268 is part of the active site.

It belongs to the thiolase-like superfamily. FabH family. As to quaternary structure, homodimer.

The protein resides in the cytoplasm. The catalysed reaction is malonyl-[ACP] + acetyl-CoA + H(+) = 3-oxobutanoyl-[ACP] + CO2 + CoA. Its pathway is lipid metabolism; fatty acid biosynthesis. Its function is as follows. Catalyzes the condensation reaction of fatty acid synthesis by the addition to an acyl acceptor of two carbons from malonyl-ACP. Catalyzes the first condensation reaction which initiates fatty acid synthesis and may therefore play a role in governing the total rate of fatty acid production. Possesses both acetoacetyl-ACP synthase and acetyl transacylase activities. Its substrate specificity determines the biosynthesis of branched-chain and/or straight-chain of fatty acids. In Neorickettsia sennetsu (strain ATCC VR-367 / Miyayama) (Ehrlichia sennetsu), this protein is Beta-ketoacyl-[acyl-carrier-protein] synthase III.